The sequence spans 334 residues: tRNA N6-adenosine threonylcarbamoyltransferase (334 aa).

Fe cation is bound by residues His-111 and His-115. Residues 134 to 138, Asp-167, Gly-180, Asp-184, and Asn-272 each bind substrate; that span reads IVSGG. Asp-300 lines the Fe cation pocket.

It belongs to the KAE1 / TsaD family. It depends on Fe(2+) as a cofactor.

The protein localises to the cytoplasm. The enzyme catalyses L-threonylcarbamoyladenylate + adenosine(37) in tRNA = N(6)-L-threonylcarbamoyladenosine(37) in tRNA + AMP + H(+). Its function is as follows. Required for the formation of a threonylcarbamoyl group on adenosine at position 37 (t(6)A37) in tRNAs that read codons beginning with adenine. Is involved in the transfer of the threonylcarbamoyl moiety of threonylcarbamoyl-AMP (TC-AMP) to the N6 group of A37, together with TsaE and TsaB. TsaD likely plays a direct catalytic role in this reaction. This is tRNA N6-adenosine threonylcarbamoyltransferase from Dictyoglomus turgidum (strain DSM 6724 / Z-1310).